We begin with the raw amino-acid sequence, 371 residues long: Histidinol-phosphate aminotransferase (371 aa).

Residue Lys-228 is modified to N6-(pyridoxal phosphate)lysine.

The protein belongs to the class-II pyridoxal-phosphate-dependent aminotransferase family. Histidinol-phosphate aminotransferase subfamily. The cofactor is pyridoxal 5'-phosphate.

It carries out the reaction L-histidinol phosphate + 2-oxoglutarate = 3-(imidazol-4-yl)-2-oxopropyl phosphate + L-glutamate. It participates in amino-acid biosynthesis; L-histidine biosynthesis; L-histidine from 5-phospho-alpha-D-ribose 1-diphosphate: step 7/9. The chain is Histidinol-phosphate aminotransferase from Methanococcus maripaludis (strain C7 / ATCC BAA-1331).